A 48-amino-acid polypeptide reads, in one-letter code: Cathepsin B (48 aa).

This sequence belongs to the peptidase C1 family. Dimer of a heavy chain and a light chain cross-linked by a disulfide bond.

The protein localises to the lysosome. The enzyme catalyses Hydrolysis of proteins with broad specificity for peptide bonds. Preferentially cleaves -Arg-Arg-|-Xaa bonds in small molecule substrates (thus differing from cathepsin L). In addition to being an endopeptidase, shows peptidyl-dipeptidase activity, liberating C-terminal dipeptides.. Functionally, thiol protease which is believed to participate in intracellular degradation and turnover of proteins. Has also been implicated in tumor invasion and metastasis. The chain is Cathepsin B (CTSB) from Coturnix japonica (Japanese quail).